A 61-amino-acid polypeptide reads, in one-letter code: Photosystem II reaction center protein K (61 aa).

Positions 1–24 (MPNIFSLICICLNSALQPSGFFFA) are excised as a propeptide. A helical transmembrane segment spans residues 36–56 (IVDFMPVIPVLFFLLAFVWQA).

The protein belongs to the PsbK family. PSII is composed of 1 copy each of membrane proteins PsbA, PsbB, PsbC, PsbD, PsbE, PsbF, PsbH, PsbI, PsbJ, PsbK, PsbL, PsbM, PsbT, PsbX, PsbY, PsbZ, Psb30/Ycf12, at least 3 peripheral proteins of the oxygen-evolving complex and a large number of cofactors. It forms dimeric complexes.

The protein localises to the plastid. It is found in the chloroplast thylakoid membrane. One of the components of the core complex of photosystem II (PSII). PSII is a light-driven water:plastoquinone oxidoreductase that uses light energy to abstract electrons from H(2)O, generating O(2) and a proton gradient subsequently used for ATP formation. It consists of a core antenna complex that captures photons, and an electron transfer chain that converts photonic excitation into a charge separation. The protein is Photosystem II reaction center protein K of Nymphaea alba (White water-lily).